Reading from the N-terminus, the 250-residue chain is Cyclin-Q (250 aa).

M1 is subject to N-acetylmethionine. Basic and acidic residues predominate over residues 1 to 10 (MEAVRPDSCE). Positions 1 to 22 (MEAVRPDSCERGTAAARAEERP) are disordered.

Belongs to the cyclin family. Cyclin-like FAM58 subfamily. In terms of assembly, associates with CDK10 to promote its kinase activity.

Its function is as follows. Activating cyclin for the cyclin-associated kinase CDK10. In Rattus norvegicus (Rat), this protein is Cyclin-Q (Ccnq).